Consider the following 319-residue polypeptide: Methionyl-tRNA formyltransferase (319 aa).

A (6S)-5,6,7,8-tetrahydrofolate-binding site is contributed by 116-119 (SLLP).

This sequence belongs to the Fmt family.

The enzyme catalyses L-methionyl-tRNA(fMet) + (6R)-10-formyltetrahydrofolate = N-formyl-L-methionyl-tRNA(fMet) + (6S)-5,6,7,8-tetrahydrofolate + H(+). Attaches a formyl group to the free amino group of methionyl-tRNA(fMet). The formyl group appears to play a dual role in the initiator identity of N-formylmethionyl-tRNA by promoting its recognition by IF2 and preventing the misappropriation of this tRNA by the elongation apparatus. The protein is Methionyl-tRNA formyltransferase of Wigglesworthia glossinidia brevipalpis.